The following is a 372-amino-acid chain: Homoserine O-acetyltransferase (372 aa).

Positions 43-353 constitute an AB hydrolase-1 domain; sequence NAILIFHALT…DKGHDSFLLK (311 aa). Serine 148 functions as the Nucleophile in the catalytic mechanism. Arginine 218 contributes to the substrate binding site. Catalysis depends on residues aspartate 314 and histidine 347. Aspartate 348 contributes to the substrate binding site.

It belongs to the AB hydrolase superfamily. MetX family. As to quaternary structure, homodimer.

It localises to the cytoplasm. The enzyme catalyses L-homoserine + acetyl-CoA = O-acetyl-L-homoserine + CoA. It participates in amino-acid biosynthesis; L-methionine biosynthesis via de novo pathway; O-acetyl-L-homoserine from L-homoserine: step 1/1. Transfers an acetyl group from acetyl-CoA to L-homoserine, forming acetyl-L-homoserine. This chain is Homoserine O-acetyltransferase, found in Pelagibacter ubique (strain HTCC1062).